Reading from the N-terminus, the 114-residue chain is C-X-C motif chemokine 6 (114 aa).

A signal peptide spans 1–37 (MSLPSSRAARVPGPSGSLCALLALLLLLTPPGPLASA). 2 cysteine pairs are disulfide-bonded: C49/C75 and C51/C91.

This sequence belongs to the intercrine alpha (chemokine CxC) family.

The protein localises to the secreted. In terms of biological role, chemotactic for neutrophil granulocytes. Signals through binding and activation of its receptors (CXCR1 and CXCR2). In addition to its chemotactic and angiogenic properties, it has strong antibacterial activity against Gram-positive and Gram-negative bacteria (90-fold-higher when compared to CXCL5 and CXCL7). The protein is C-X-C motif chemokine 6 (CXCL6) of Homo sapiens (Human).